Reading from the N-terminus, the 519-residue chain is 2-isopropylmalate synthase (519 aa).

One can recognise a Pyruvate carboxyltransferase domain in the interval 5-267 (VKIFDTTLRD…NTNIRSHEIS (263 aa)). 4 residues coordinate Mn(2+): Asp14, His202, His204, and Asn238. Residues 392–519 (KLLYLQASSG…KKQQTQTAGV (128 aa)) are regulatory domain.

It belongs to the alpha-IPM synthase/homocitrate synthase family. LeuA type 1 subfamily. As to quaternary structure, homodimer. Requires Mn(2+) as cofactor.

The protein localises to the cytoplasm. It catalyses the reaction 3-methyl-2-oxobutanoate + acetyl-CoA + H2O = (2S)-2-isopropylmalate + CoA + H(+). Its pathway is amino-acid biosynthesis; L-leucine biosynthesis; L-leucine from 3-methyl-2-oxobutanoate: step 1/4. Its function is as follows. Catalyzes the condensation of the acetyl group of acetyl-CoA with 3-methyl-2-oxobutanoate (2-ketoisovalerate) to form 3-carboxy-3-hydroxy-4-methylpentanoate (2-isopropylmalate). This is 2-isopropylmalate synthase from Pseudoalteromonas atlantica (strain T6c / ATCC BAA-1087).